The following is a 256-amino-acid chain: F-actin-capping protein subunit beta (256 aa).

Met-1 bears the N-acetylmethionine mark.

This sequence belongs to the F-actin-capping protein beta subunit family. As to quaternary structure, component of the F-actin capping complex, composed of a heterodimer of an alpha and a beta subunit.

Its subcellular location is the cytoplasm. The protein resides in the cytoskeleton. F-actin-capping proteins bind in a Ca(2+)-independent manner to the fast growing ends of actin filaments (barbed end) thereby blocking the exchange of subunits at these ends. Unlike other capping proteins (such as gelsolin and severin), these proteins do not sever actin filaments. The chain is F-actin-capping protein subunit beta from Arabidopsis thaliana (Mouse-ear cress).